The chain runs to 749 residues: Cytosolic phospholipase A2 (749 aa).

Positions 1–178 (MSFIDPYQHI…MKKLLGPKKS (178 aa)) are phospholipid binding. Ser-2 is subject to Phosphoserine. Residues 6–122 (PYQHIIVEHQ…KVGEKKEVPF (117 aa)) enclose the C2 domain. The Ca(2+) site is built by Asp-40, Thr-41, Asp-43, Asn-65, Asp-93, Ala-94, and Asn-95. Residues 140 to 740 (SCPDLRFSMA…SNVEARRFFN (601 aa)) enclose the PLA2c domain. The Nucleophile role is filled by Ser-228. At Thr-268 the chain carries Phosphothreonine. A disordered region spans residues 427-456 (KHIVSNDSSDSDDESQEPKGTENEDAERDY). Ser-434, Ser-435, and Ser-437 each carry phosphoserine. Residue Ser-505 is modified to Phosphoserine; by MAPK. Ser-515 is modified (phosphoserine). Residue Lys-541 forms a Glycyl lysine isopeptide (Lys-Gly) (interchain with G-Cter in SUMO2) linkage. Residue Asp-549 is the Proton acceptor of the active site. A Glycyl lysine isopeptide (Lys-Gly) (interchain with G-Cter in SUMO2) cross-link involves residue Lys-606. 2 positions are modified to phosphoserine: Ser-727 and Ser-729.

In terms of assembly, interacts with KAT5. In terms of processing, phosphorylated at both Ser-505 and Ser-727 in response to mitogenic stimuli.

The protein localises to the cytoplasm. It localises to the golgi apparatus membrane. It is found in the nucleus envelope. The catalysed reaction is a 1,2-diacyl-sn-glycero-3-phosphocholine + H2O = a 1-acyl-sn-glycero-3-phosphocholine + a fatty acid + H(+). It carries out the reaction a 1-O-alkyl-2-acyl-sn-glycero-3-phosphocholine + H2O = a 1-O-alkyl-sn-glycero-3-phosphocholine + a fatty acid + H(+). It catalyses the reaction a 1-acyl-sn-glycero-3-phosphocholine + H2O = sn-glycerol 3-phosphocholine + a fatty acid + H(+). The enzyme catalyses 1-hexadecanoyl-2-(5Z,8Z,11Z,14Z-eicosatetraenoyl)-sn-glycero-3-phosphocholine + H2O = 1-hexadecanoyl-sn-glycero-3-phosphocholine + (5Z,8Z,11Z,14Z)-eicosatetraenoate + H(+). The catalysed reaction is 1,2-di-(5Z,8Z,11Z,14Z-eicosatetraenoyl)-sn-glycero-3-phosphocholine + H2O = 1-(5Z,8Z,11Z,14Z-eicosatetraenoyl)-sn-glycero-3-phosphocholine + (5Z,8Z,11Z,14Z)-eicosatetraenoate + H(+). It carries out the reaction 1-octadecanoyl-2-(5Z,8Z,11Z,14Z-eicosatetraenoyl)-sn-glycero-3-phosphocholine + H2O = 1-octadecanoyl-sn-glycero-3-phosphocholine + (5Z,8Z,11Z,14Z)-eicosatetraenoate + H(+). It catalyses the reaction 1-hexadecanoyl-2-(9Z,12Z-octadecadienoyl)-sn-glycero-3-phosphocholine + H2O = (9Z,12Z)-octadecadienoate + 1-hexadecanoyl-sn-glycero-3-phosphocholine + H(+). The enzyme catalyses 1-octadecanoyl-2-(9Z,12Z,15Z-octadecatrienoyl)-sn-glycero-3-phosphocholine + H2O = (9Z,12Z,15Z)-octadecatrienoate + 1-octadecanoyl-sn-glycero-3-phosphocholine + H(+). The catalysed reaction is 1-(5Z,8Z,11Z,14Z-eicosatetraenoyl)-2-hexadecanoyl-sn-glycero-3-phosphocholine + H2O = 1-(5Z,8Z,11Z,14Z-eicosatetraenoyl)-sn-glycero-3-phosphocholine + hexadecanoate + H(+). It carries out the reaction 1-O-hexadecyl-2-(5Z,8Z,11Z,14Z)-eicosatetraenoyl-sn-glycero-3-phosphocholine + H2O = 1-O-hexadecyl-sn-glycero-3-phosphocholine + (5Z,8Z,11Z,14Z)-eicosatetraenoate + H(+). It catalyses the reaction 1,2-di-(9Z-octadecenoyl)-sn-glycero-3-phospho-(1'-sn-glycerol) + H2O = 1-(9Z-octadecenoyl)-sn-glycero-3-phospho-(1'-sn-glycerol) + (9Z)-octadecenoate + H(+). The enzyme catalyses 1-octadecanoyl-2-(5Z,8Z,11Z,14Z-eicosatetraenoyl)-sn-glycero-3-phosphate + H2O = 1-octadecanoyl-sn-glycero-3-phosphate + (5Z,8Z,11Z,14Z)-eicosatetraenoate + H(+). The catalysed reaction is 1-hexadecanoyl-sn-glycero-3-phosphocholine + H2O = sn-glycerol 3-phosphocholine + hexadecanoate + H(+). It carries out the reaction 2-(prostaglandin E2)-sn-glycero-3-phosphoethanolamine + H2O = sn-glycero-3-phosphoethanolamine + prostaglandin E2 + H(+). It catalyses the reaction 2-[(15S)-hydroxy-(5Z,8Z,11Z,13E)-eicosatetraenoyl]-sn-glycero-3-phosphocholine + H2O = (15S)-hydroxy-(5Z,8Z,11Z,13E)-eicosatetraenoate + sn-glycerol 3-phosphocholine + H(+). The enzyme catalyses 2-[(15R)-hydroxy-(5Z,8Z,11Z,13E)-eicosatetraenoyl]-sn-glycero-3-phosphocholine + H2O = (15R)-hydroxy-(5Z,8Z,11Z,13E)-eicosatetraenoate + sn-glycerol 3-phosphocholine + H(+). The catalysed reaction is 2-(prostaglandin E2)-sn-glycero-3-phosphocholine + H2O = prostaglandin E2 + sn-glycerol 3-phosphocholine + H(+). It carries out the reaction 2-[(11R)-hydroxy-(5Z,8Z,12E,14Z)-eicosatetraenoyl]-sn-glycero-3-phosphocholine + H2O = (11R)-hydroxy-(5Z,8Z,12E,14Z)-eicosatetraenoate + sn-glycerol 3-phosphocholine + H(+). It catalyses the reaction 1-(5Z,8Z,11Z,14Z-eicosatetraenoyl)-2-O-hexadecyl-sn-glycero-3-phosphocholine + H2O = 2-O-hexadecyl-sn-glycero-3-phosphocholine + (5Z,8Z,11Z,14Z)-eicosatetraenoate + H(+). The enzyme catalyses 1-octadecanoyl-2-(5Z,8Z,11Z,14Z-eicosatetraenoyl)-sn-glycero-3-phosphocholine + glycerol = 1-(5Z,8Z,11Z,14Z-eicosatetraenoyl)-glycerol + 1-octadecanoyl-sn-glycero-3-phosphocholine. The catalysed reaction is 1-octadecanoyl-2-(9Z,12Z,15Z-octadecatrienoyl)-sn-glycero-3-phosphocholine + glycerol = 1-(9Z,12Z,15Z-octadecatrienoyl)-glycerol + 1-octadecanoyl-sn-glycero-3-phosphocholine. The protein operates within membrane lipid metabolism; glycerophospholipid metabolism. It participates in lipid metabolism; arachidonate metabolism. It functions in the pathway lipid metabolism; prostaglandin biosynthesis. Its pathway is lipid metabolism; leukotriene B4 biosynthesis. With respect to regulation, activated by cytosolic calcium, which is necessary for binding to membrane lipids. Activated by phosphorylation in response to mitogenic stimuli. Its function is as follows. Has primarily calcium-dependent phospholipase and lysophospholipase activities, with a major role in membrane lipid remodeling and biosynthesis of lipid mediators of the inflammatory response. Plays an important role in embryo implantation and parturition through its ability to trigger prostanoid production. Preferentially hydrolyzes the ester bond of the fatty acyl group attached at sn-2 position of phospholipids (phospholipase A2 activity). Selectively hydrolyzes sn-2 arachidonoyl group from membrane phospholipids, providing the precursor for eicosanoid biosynthesis via the cyclooxygenase pathway. In an alternative pathway of eicosanoid biosynthesis, hydrolyzes sn-2 fatty acyl chain of eicosanoid lysophopholipids to release free bioactive eicosanoids. Hydrolyzes the ester bond of the fatty acyl group attached at sn-1 position of phospholipids (phospholipase A1 activity) only if an ether linkage rather than an ester linkage is present at the sn-2 position. This hydrolysis is not stereospecific. Has calcium-independent phospholipase A2 and lysophospholipase activities in the presence of phosphoinositides. Has O-acyltransferase activity. Catalyzes the transfer of fatty acyl chains from phospholipids to a primary hydroxyl group of glycerol (sn-1 or sn-3), potentially contributing to monoacylglycerol synthesis. The chain is Cytosolic phospholipase A2 (PLA2G4A) from Equus caballus (Horse).